The following is a 283-amino-acid chain: NADPH-dependent 7-cyano-7-deazaguanine reductase (283 aa).

A substrate-binding site is contributed by Ile-90–Ser-92. Residue Ser-92–Lys-93 coordinates NADPH. Cys-191 functions as the Thioimide intermediate in the catalytic mechanism. The active-site Proton donor is the Asp-198. His-230 to Glu-231 serves as a coordination point for substrate. NADPH is bound at residue Arg-259 to Gly-260.

It belongs to the GTP cyclohydrolase I family. QueF type 2 subfamily. As to quaternary structure, homodimer.

Its subcellular location is the cytoplasm. The catalysed reaction is 7-aminomethyl-7-carbaguanine + 2 NADP(+) = 7-cyano-7-deazaguanine + 2 NADPH + 3 H(+). The protein operates within tRNA modification; tRNA-queuosine biosynthesis. Catalyzes the NADPH-dependent reduction of 7-cyano-7-deazaguanine (preQ0) to 7-aminomethyl-7-deazaguanine (preQ1). In Tolumonas auensis (strain DSM 9187 / NBRC 110442 / TA 4), this protein is NADPH-dependent 7-cyano-7-deazaguanine reductase.